The following is a 205-amino-acid chain: UPF0056 membrane protein MJ1677 (205 aa).

6 consecutive transmembrane segments (helical) span residues 7-27 (ILAF…PVFI), 49-69 (ALAI…FFGI), 70-90 (SLDA…LDMV), 112-132 (IALM…TACM), 145-165 (FLVI…LLSA), and 185-205 (GLIL…GALL).

Belongs to the UPF0056 (MarC) family.

It is found in the cell membrane. This chain is UPF0056 membrane protein MJ1677, found in Methanocaldococcus jannaschii (strain ATCC 43067 / DSM 2661 / JAL-1 / JCM 10045 / NBRC 100440) (Methanococcus jannaschii).